A 104-amino-acid polypeptide reads, in one-letter code: MAAKIKKGDTVVVLTGRDAGRSGEVIQVLPKDGKAFVRGVNLVKKHQKQTQNAEGGIISKEAAIQLSNLAFQDVNGKPTRVGFRILEDGRKVRFAKTTGDQIDG.

The protein belongs to the universal ribosomal protein uL24 family. As to quaternary structure, part of the 50S ribosomal subunit.

One of two assembly initiator proteins, it binds directly to the 5'-end of the 23S rRNA, where it nucleates assembly of the 50S subunit. In terms of biological role, one of the proteins that surrounds the polypeptide exit tunnel on the outside of the subunit. The sequence is that of Large ribosomal subunit protein uL24 from Methylorubrum populi (strain ATCC BAA-705 / NCIMB 13946 / BJ001) (Methylobacterium populi).